Here is a 231-residue protein sequence, read N- to C-terminus: MYDIKAWQHVFKLDPAKEISDNDLDALCMSDTDAIMIGGTDNVTEDNVIHLMSRVRRYPLPLVLEISNIESIIPGFDFYFVPTVLNSQDTTYHNGMMHKALKQFGFMVNFDEVVLEGYLVLNPDSKVAKLTQSNTNIDIEDVEAYAQMVNEMYKLPLMYLEYSGQYGDVEKVEAASRLLTNTQLFYGGGITSIEQAREMAQYADTIVVGNIIYDDIKKAIKTVKIKKESNK.

K12 serves as a coordination point for sn-glycerol 1-phosphate. Residues D14 and T40 each coordinate Mg(2+). Sn-glycerol 1-phosphate is bound by residues 159 to 164 (YLEYSG), G189, and 209 to 210 (GN).

This sequence belongs to the GGGP/HepGP synthase family. Group I subfamily. As to quaternary structure, homodimer. Mg(2+) is required as a cofactor.

It carries out the reaction sn-glycerol 1-phosphate + all-trans-heptaprenyl diphosphate = 3-heptaprenyl-sn-glycero-1-phosphate + diphosphate. It participates in membrane lipid metabolism; glycerophospholipid metabolism. Its function is as follows. Prenyltransferase that catalyzes in vivo the transfer of the heptaprenyl moiety of heptaprenyl pyrophosphate (HepPP; 35 carbon atoms) to the C3 hydroxyl of sn-glycerol-1-phosphate (G1P), producing heptaprenylglyceryl phosphate (HepGP). This reaction is an ether-bond-formation step in the biosynthesis of archaea-type G1P-based membrane lipids found in Bacillales. The protein is Heptaprenylglyceryl phosphate synthase of Staphylococcus haemolyticus (strain JCSC1435).